The sequence spans 319 residues: MTDASGSERLKRAKGISEGTPSSLPDHLIRATAAEGKIRVVGLVATQAVQEARERHKLSYVATVALGRAMSAALLLAANLKRRQARINLQLKGNGPLGNIWVDAGLDGTVRGYVSNPAIELPLTAESKLDVGQAVGRYGYLHVLRDLGYGQPYTSAVELVSGEVGDDITYYLSSSEQIPSAVLLGVNLDSQRVRAAGGVLLQLMPGAPASLIPEMEARLAKVEEFSPMLACGGGLRELLQLCLGDLDLKIAPEMRTIRFYCKCNSDRVKGALRMLGRDELLDMIHTDKGAEAVCQFCNEVYRISEDELRSIVAEMSATP.

The span at 1–10 (MTDASGSERL) shows a compositional bias: basic and acidic residues. A disordered region spans residues 1 to 25 (MTDASGSERLKRAKGISEGTPSSLP). 2 disulfides stabilise this stretch: Cys-261–Cys-263 and Cys-294–Cys-297.

The protein belongs to the HSP33 family. Post-translationally, under oxidizing conditions two disulfide bonds are formed involving the reactive cysteines. Under reducing conditions zinc is bound to the reactive cysteines and the protein is inactive.

The protein resides in the cytoplasm. In terms of biological role, redox regulated molecular chaperone. Protects both thermally unfolding and oxidatively damaged proteins from irreversible aggregation. Plays an important role in the bacterial defense system toward oxidative stress. The chain is 33 kDa chaperonin from Synechococcus sp. (strain JA-2-3B'a(2-13)) (Cyanobacteria bacterium Yellowstone B-Prime).